Here is a 527-residue protein sequence, read N- to C-terminus: Peptide chain release factor 3 (527 aa).

The 269-residue stretch at 10–278 folds into the tr-type G domain; that stretch reads DKRRTFAIIS…AFIEYAPAPL (269 aa). GTP-binding positions include 19 to 26, 87 to 91, and 141 to 144; these read SHPDAGKT, DTPGH, and NKLD.

It belongs to the TRAFAC class translation factor GTPase superfamily. Classic translation factor GTPase family. PrfC subfamily.

The protein localises to the cytoplasm. Its function is as follows. Increases the formation of ribosomal termination complexes and stimulates activities of RF-1 and RF-2. It binds guanine nucleotides and has strong preference for UGA stop codons. It may interact directly with the ribosome. The stimulation of RF-1 and RF-2 is significantly reduced by GTP and GDP, but not by GMP. The protein is Peptide chain release factor 3 of Pelobacter propionicus (strain DSM 2379 / NBRC 103807 / OttBd1).